Reading from the N-terminus, the 874-residue chain is Valine--tRNA ligase (874 aa).

The 'HIGH' region motif lies at 51 to 61; it reads PNVTGVLHIGH. The 'KMSKS' region motif lies at 533-537; the sequence is KMSKS. Position 536 (Lys-536) interacts with ATP. The stretch at 813-873 forms a coiled coil; it reads LVARLKKQLE…IKQELDLLEQ (61 aa).

The protein belongs to the class-I aminoacyl-tRNA synthetase family. ValS type 1 subfamily. Monomer.

The protein localises to the cytoplasm. It catalyses the reaction tRNA(Val) + L-valine + ATP = L-valyl-tRNA(Val) + AMP + diphosphate. Catalyzes the attachment of valine to tRNA(Val). As ValRS can inadvertently accommodate and process structurally similar amino acids such as threonine, to avoid such errors, it has a 'posttransfer' editing activity that hydrolyzes mischarged Thr-tRNA(Val) in a tRNA-dependent manner. This is Valine--tRNA ligase from Helicobacter pylori (strain ATCC 700392 / 26695) (Campylobacter pylori).